We begin with the raw amino-acid sequence, 183 residues long: Ran guanine nucleotide release factor (183 aa).

The interval 23 to 66 is interaction with RAN; it reads ELRQIPDNQEVFAHSQTDQSIIIELLEYQSQVQDADAARYHFED.

This sequence belongs to the MOG1 family. As to quaternary structure, monomer. Interacts with ran.

The protein resides in the nucleus. Its subcellular location is the cytoplasm. It is found in the perinuclear region. It localises to the cell membrane. In terms of biological role, may regulate the intracellular trafficking of RAN. Promotes guanine nucleotide release from RAN and inhibits binding of new GTP. Plays a role in the regulation of the levels of GTP-bound RAN in the nucleus. Required for normal expression of the ion channel hcn4 and for normal expression of the cardiac transcription factors nkx2.5, gata4 and hand2 during embryonic development. Required for normal embryonic heart development and normal heart rate. The protein is Ran guanine nucleotide release factor of Danio rerio (Zebrafish).